Reading from the N-terminus, the 156-residue chain is Small ribosomal subunit protein uS7 (156 aa).

The protein belongs to the universal ribosomal protein uS7 family. Part of the 30S ribosomal subunit. Contacts proteins S9 and S11.

Its function is as follows. One of the primary rRNA binding proteins, it binds directly to 16S rRNA where it nucleates assembly of the head domain of the 30S subunit. Is located at the subunit interface close to the decoding center, probably blocks exit of the E-site tRNA. This Thermoanaerobacter pseudethanolicus (strain ATCC 33223 / 39E) (Clostridium thermohydrosulfuricum) protein is Small ribosomal subunit protein uS7.